The sequence spans 365 residues: MAGNVFGQMFRITTWGESHGKAVGVVVDGLPAGLPFSEADIQKELDRRRPGQSEVSTPRHEADRVEILSGIFEGMSTGTPVSMLVWNSDARSSAYDVIKDTPRPGHADFTYMARYGMRDHRGGGRSSARETIGRVAGGALAKLLLSRFGILIAGHVLELGALRAKPLSFEEILENVEKTPVRCADLEAAEKMLEKVAALRQEGDSIGGIVELIIRGVPAGLGEPVFDRLDADLAKALMSIPAVKGFEIGAGFEAARLYGSEMNDPFRIKEGKITTSSNNAGGILGGISTGLDIVCRAAVKPTPSIGKVQQTVDLKTLENTEIAIKGRHDPTIPPRMVPVAEAMVALVIADHMLRSGFINPRTLLE.

The disordered stretch occupies residues 41-61 (IQKELDRRRPGQSEVSTPRHE). Residue Arg48 participates in NADP(+) binding. FMN is bound by residues 125–127 (RSS), Gly285, 300–304 (KPTPS), and Arg327.

The protein belongs to the chorismate synthase family. It depends on FMNH2 as a cofactor.

The catalysed reaction is 5-O-(1-carboxyvinyl)-3-phosphoshikimate = chorismate + phosphate. The protein operates within metabolic intermediate biosynthesis; chorismate biosynthesis; chorismate from D-erythrose 4-phosphate and phosphoenolpyruvate: step 7/7. Catalyzes the anti-1,4-elimination of the C-3 phosphate and the C-6 proR hydrogen from 5-enolpyruvylshikimate-3-phosphate (EPSP) to yield chorismate, which is the branch point compound that serves as the starting substrate for the three terminal pathways of aromatic amino acid biosynthesis. This reaction introduces a second double bond into the aromatic ring system. This chain is Chorismate synthase, found in Methanosarcina barkeri (strain Fusaro / DSM 804).